Here is a 301-residue protein sequence, read N- to C-terminus: GTPase Era (301 aa).

The 169-residue stretch at 7–175 folds into the Era-type G domain; the sequence is YCGFIAIVGR…AGIVRKHLPE (169 aa). A G1 region spans residues 15 to 22; sequence GRPNVGKS. Residue 15-22 participates in GTP binding; sequence GRPNVGKS. The interval 41 to 45 is G2; that stretch reads QTTRH. A G3 region spans residues 62–65; the sequence is DTPG. Residues 62-66 and 124-127 each bind GTP; these read DTPGL and NKVD. The interval 124 to 127 is G4; it reads NKVD. The tract at residues 154–156 is G5; that stretch reads ISA. Residues 206–283 form the KH type-2 domain; sequence LGAELPYSVT…HLELWVKVKS (78 aa).

Belongs to the TRAFAC class TrmE-Era-EngA-EngB-Septin-like GTPase superfamily. Era GTPase family. As to quaternary structure, monomer.

Its subcellular location is the cytoplasm. The protein resides in the cell inner membrane. An essential GTPase that binds both GDP and GTP, with rapid nucleotide exchange. Plays a role in 16S rRNA processing and 30S ribosomal subunit biogenesis and possibly also in cell cycle regulation and energy metabolism. The polypeptide is GTPase Era (Salmonella paratyphi B (strain ATCC BAA-1250 / SPB7)).